Consider the following 258-residue polypeptide: Imidazole glycerol phosphate synthase subunit HisF (258 aa).

Residues D11 and D130 contribute to the active site.

It belongs to the HisA/HisF family. As to quaternary structure, heterodimer of HisH and HisF.

The protein localises to the cytoplasm. It catalyses the reaction 5-[(5-phospho-1-deoxy-D-ribulos-1-ylimino)methylamino]-1-(5-phospho-beta-D-ribosyl)imidazole-4-carboxamide + L-glutamine = D-erythro-1-(imidazol-4-yl)glycerol 3-phosphate + 5-amino-1-(5-phospho-beta-D-ribosyl)imidazole-4-carboxamide + L-glutamate + H(+). It functions in the pathway amino-acid biosynthesis; L-histidine biosynthesis; L-histidine from 5-phospho-alpha-D-ribose 1-diphosphate: step 5/9. IGPS catalyzes the conversion of PRFAR and glutamine to IGP, AICAR and glutamate. The HisF subunit catalyzes the cyclization activity that produces IGP and AICAR from PRFAR using the ammonia provided by the HisH subunit. The protein is Imidazole glycerol phosphate synthase subunit HisF of Methylorubrum populi (strain ATCC BAA-705 / NCIMB 13946 / BJ001) (Methylobacterium populi).